Here is a 247-residue protein sequence, read N- to C-terminus: Triosephosphate isomerase (247 aa).

9 to 11 is a binding site for substrate; sequence NWK. His93 (electrophile) is an active-site residue. The active-site Proton acceptor is the Glu163. Residues Gly169, Ser209, and 230–231 each bind substrate; that span reads GG.

It belongs to the triosephosphate isomerase family. Homodimer.

It localises to the cytoplasm. The catalysed reaction is D-glyceraldehyde 3-phosphate = dihydroxyacetone phosphate. The protein operates within carbohydrate biosynthesis; gluconeogenesis. Its pathway is carbohydrate degradation; glycolysis; D-glyceraldehyde 3-phosphate from glycerone phosphate: step 1/1. Functionally, involved in the gluconeogenesis. Catalyzes stereospecifically the conversion of dihydroxyacetone phosphate (DHAP) to D-glyceraldehyde-3-phosphate (G3P). This chain is Triosephosphate isomerase, found in Dinoroseobacter shibae (strain DSM 16493 / NCIMB 14021 / DFL 12).